Reading from the N-terminus, the 310-residue chain is Acetyl-coenzyme A carboxylase carboxyl transferase subunit beta (310 aa).

A CoA carboxyltransferase N-terminal domain is found at 27-296 (LWKKCPKCSA…PEFENEEELE (270 aa)). Residues Cys-31, Cys-34, Cys-50, and Cys-53 each coordinate Zn(2+). The segment at 31–53 (CPKCSAVLYRPELEKNLDVCPKC) adopts a C4-type zinc-finger fold. The segment at 285 to 310 (PEPEFENEEELEEEEMERPEPPDNVE) is disordered. Positions 287 to 310 (PEFENEEELEEEEMERPEPPDNVE) are enriched in acidic residues.

This sequence belongs to the AccD/PCCB family. Acetyl-CoA carboxylase is a heterohexamer composed of biotin carboxyl carrier protein (AccB), biotin carboxylase (AccC) and two subunits each of ACCase subunit alpha (AccA) and ACCase subunit beta (AccD). Requires Zn(2+) as cofactor.

The protein localises to the cytoplasm. The catalysed reaction is N(6)-carboxybiotinyl-L-lysyl-[protein] + acetyl-CoA = N(6)-biotinyl-L-lysyl-[protein] + malonyl-CoA. It participates in lipid metabolism; malonyl-CoA biosynthesis; malonyl-CoA from acetyl-CoA: step 1/1. In terms of biological role, component of the acetyl coenzyme A carboxylase (ACC) complex. Biotin carboxylase (BC) catalyzes the carboxylation of biotin on its carrier protein (BCCP) and then the CO(2) group is transferred by the transcarboxylase to acetyl-CoA to form malonyl-CoA. The chain is Acetyl-coenzyme A carboxylase carboxyl transferase subunit beta from Hahella chejuensis (strain KCTC 2396).